The following is a 525-amino-acid chain: Transmembrane protein 184C (525 aa).

The next 7 helical transmembrane spans lie at 17–37 (LLVL…IWKF), 48–68 (SWFI…WGIL), 83–103 (IIRI…ALVY), 121–141 (VIYN…PNLI), 212–232 (YLVI…LLFY), 254–274 (VVFV…LGVI), and 287–307 (AVAT…AAIA). 2 disordered regions span residues 358-394 (PKKK…PSPG) and 483-525 (LFPS…STDP). Low complexity predominate over residues 373–388 (SSLLSSSSQDLTSGSS). Positions 483–502 (LFPSTETSENSMIDTSESQQ) are enriched in polar residues. A compositionally biased stretch (low complexity) spans 503–525 (ESSDLCTESSDSSTESSDLSTDP).

Belongs to the TMEM184 family.

The protein localises to the membrane. Functionally, possible tumor suppressor which may play a role in cell growth. This Mus musculus (Mouse) protein is Transmembrane protein 184C (Tmem184c).